A 455-amino-acid polypeptide reads, in one-letter code: ATP-dependent protease ATPase subunit HslU (455 aa).

ATP-binding positions include isoleucine 19 and 61 to 66 (GVGKTE). The disordered stretch occupies residues 144–163 (ESKVGFANEPAEDAASKKEK). The ATP site is built by aspartate 268, glutamate 333, and arginine 405.

Belongs to the ClpX chaperone family. HslU subfamily. As to quaternary structure, a double ring-shaped homohexamer of HslV is capped on each side by a ring-shaped HslU homohexamer. The assembly of the HslU/HslV complex is dependent on binding of ATP.

It is found in the cytoplasm. Functionally, ATPase subunit of a proteasome-like degradation complex; this subunit has chaperone activity. The binding of ATP and its subsequent hydrolysis by HslU are essential for unfolding of protein substrates subsequently hydrolyzed by HslV. HslU recognizes the N-terminal part of its protein substrates and unfolds these before they are guided to HslV for hydrolysis. This Francisella tularensis subsp. holarctica (strain FTNF002-00 / FTA) protein is ATP-dependent protease ATPase subunit HslU.